The following is a 121-amino-acid chain: Large ribosomal subunit protein bL12 (121 aa).

The protein belongs to the bacterial ribosomal protein bL12 family. In terms of assembly, homodimer. Part of the ribosomal stalk of the 50S ribosomal subunit. Forms a multimeric L10(L12)X complex, where L10 forms an elongated spine to which 2 to 4 L12 dimers bind in a sequential fashion. Binds GTP-bound translation factors.

In terms of biological role, forms part of the ribosomal stalk which helps the ribosome interact with GTP-bound translation factors. Is thus essential for accurate translation. The polypeptide is Large ribosomal subunit protein bL12 (Xanthomonas euvesicatoria pv. vesicatoria (strain 85-10) (Xanthomonas campestris pv. vesicatoria)).